Consider the following 334-residue polypeptide: Holliday junction branch migration complex subunit RuvB (334 aa).

Residues 4 to 184 (ADRLIQPQIQ…FGIPLRLEFY (181 aa)) form a large ATPase domain (RuvB-L) region. ATP contacts are provided by residues arginine 24, glycine 65, lysine 68, threonine 69, threonine 70, 131 to 133 (EDY), arginine 174, tyrosine 184, and arginine 221. Threonine 69 lines the Mg(2+) pocket. Residues 185–255 (NIKDLSTIVT…VAEHALDLLD (71 aa)) are small ATPAse domain (RuvB-S). Residues 258–334 (SEGFDYMDRK…YQHFELIKPE (77 aa)) form a head domain (RuvB-H) region. DNA-binding residues include arginine 294, arginine 313, and arginine 318.

It belongs to the RuvB family. In terms of assembly, homohexamer. Forms an RuvA(8)-RuvB(12)-Holliday junction (HJ) complex. HJ DNA is sandwiched between 2 RuvA tetramers; dsDNA enters through RuvA and exits via RuvB. An RuvB hexamer assembles on each DNA strand where it exits the tetramer. Each RuvB hexamer is contacted by two RuvA subunits (via domain III) on 2 adjacent RuvB subunits; this complex drives branch migration. In the full resolvosome a probable DNA-RuvA(4)-RuvB(12)-RuvC(2) complex forms which resolves the HJ.

The protein resides in the cytoplasm. The enzyme catalyses ATP + H2O = ADP + phosphate + H(+). In terms of biological role, the RuvA-RuvB-RuvC complex processes Holliday junction (HJ) DNA during genetic recombination and DNA repair, while the RuvA-RuvB complex plays an important role in the rescue of blocked DNA replication forks via replication fork reversal (RFR). RuvA specifically binds to HJ cruciform DNA, conferring on it an open structure. The RuvB hexamer acts as an ATP-dependent pump, pulling dsDNA into and through the RuvAB complex. RuvB forms 2 homohexamers on either side of HJ DNA bound by 1 or 2 RuvA tetramers; 4 subunits per hexamer contact DNA at a time. Coordinated motions by a converter formed by DNA-disengaged RuvB subunits stimulates ATP hydrolysis and nucleotide exchange. Immobilization of the converter enables RuvB to convert the ATP-contained energy into a lever motion, pulling 2 nucleotides of DNA out of the RuvA tetramer per ATP hydrolyzed, thus driving DNA branch migration. The RuvB motors rotate together with the DNA substrate, which together with the progressing nucleotide cycle form the mechanistic basis for DNA recombination by continuous HJ branch migration. Branch migration allows RuvC to scan DNA until it finds its consensus sequence, where it cleaves and resolves cruciform DNA. The chain is Holliday junction branch migration complex subunit RuvB from Shewanella baltica (strain OS223).